Here is a 314-residue protein sequence, read N- to C-terminus: MRIVFMGTSHFAIPSLKALIASEHEIAGVVSQPDKQRGRGRKVTPTPVKEIAEQYKLELLQTANIKTPESIKRIKQWKPELIIVVSYGQIIPLSILEYPRHGCINVHASLLPRYRGAAPVQRALMDGIKSSGITIMFMDEGLDTGDIIMQEAIAVDDNINHGELEKILADMGADLLLQVVDRLVQGEKLPRVVQDDSQASYAARISKEDEIINWSEPAYAIHNRIRALNPQPGAYSYINGTKVKIFASKVRSEAGSGVIAEVIEVDKNTFQVQTGEGILEVLEIQKAGKKRMPTSEFLKGFTLHPGVLLGSKEG.

109 to 112 (SLLP) provides a ligand contact to (6S)-5,6,7,8-tetrahydrofolate.

Belongs to the Fmt family.

It carries out the reaction L-methionyl-tRNA(fMet) + (6R)-10-formyltetrahydrofolate = N-formyl-L-methionyl-tRNA(fMet) + (6S)-5,6,7,8-tetrahydrofolate + H(+). Attaches a formyl group to the free amino group of methionyl-tRNA(fMet). The formyl group appears to play a dual role in the initiator identity of N-formylmethionyl-tRNA by promoting its recognition by IF2 and preventing the misappropriation of this tRNA by the elongation apparatus. This is Methionyl-tRNA formyltransferase from Syntrophomonas wolfei subsp. wolfei (strain DSM 2245B / Goettingen).